A 259-amino-acid chain; its full sequence is MILLIDVGNTNIVLGIHDNEKYIASWRISTDSKKTSDEYSIQVMQLFNQAKLNPEDVEGIIISSVVPNIMHSLENMVRKCFCKEPIVVGPGIKTGINIKYDNPKEVGADRIVNAVAAFEKHKKPMIIIDFGTATTFCAITEKGDYLGGNICPGIQISADALFERAAKLPRIELEKPKSVICKNTVTSMQAGIIYGYIGKVEYIVKRMKKEMMDLGEKEPFVLATGGLAKLVYSETDVIDEVDRKLTLEGLKILYEKNKE.

6–13 (DVGNTNIV) lines the ATP pocket. Residues Tyr100 and 107-110 (GADR) each bind substrate. Catalysis depends on Asp109, which acts as the Proton acceptor. Position 129 (Asp129) interacts with K(+). Thr132 serves as a coordination point for ATP. Thr184 lines the substrate pocket.

The protein belongs to the type III pantothenate kinase family. As to quaternary structure, homodimer. NH4(+) serves as cofactor. Requires K(+) as cofactor.

Its subcellular location is the cytoplasm. It catalyses the reaction (R)-pantothenate + ATP = (R)-4'-phosphopantothenate + ADP + H(+). It participates in cofactor biosynthesis; coenzyme A biosynthesis; CoA from (R)-pantothenate: step 1/5. Functionally, catalyzes the phosphorylation of pantothenate (Pan), the first step in CoA biosynthesis. The polypeptide is Type III pantothenate kinase (Clostridium perfringens (strain 13 / Type A)).